Reading from the N-terminus, the 139-residue chain is Prostate-associated microseminoprotein (139 aa).

A signal peptide spans 1-35 (MALRMLWAGQAKGILGGWRTICLVVSLFLQHPGVS). Disulfide bonds link C38-C78, C46-C69, C64-C100, C67-C77, and C91-C114. Residues 116 to 139 (GGGPDLEWGSANTPAPGASAPHSS) are disordered.

It belongs to the beta-microseminoprotein family.

It localises to the secreted. In terms of biological role, acts as a ligand for C-C chemokine receptor CCR2. Signals through binding and activation of CCR2 and induces a strong chemotactic response and mobilization of intracellular calcium ions. Exhibits a chemotactic activity for monocytes and lymphocytes but not neutrophils. This Mus musculus (Mouse) protein is Prostate-associated microseminoprotein (Msmp).